A 316-amino-acid polypeptide reads, in one-letter code: tRNA dimethylallyltransferase (316 aa).

An ATP-binding site is contributed by 17-24; it reads GPTASGKT. 19–24 lines the substrate pocket; it reads TASGKT. Interaction with substrate tRNA regions lie at residues 42–45, 166–170, and 247–252; these read DSAL, QRLSR, and RCVGYR.

It belongs to the IPP transferase family. In terms of assembly, monomer. The cofactor is Mg(2+).

It carries out the reaction adenosine(37) in tRNA + dimethylallyl diphosphate = N(6)-dimethylallyladenosine(37) in tRNA + diphosphate. In terms of biological role, catalyzes the transfer of a dimethylallyl group onto the adenine at position 37 in tRNAs that read codons beginning with uridine, leading to the formation of N6-(dimethylallyl)adenosine (i(6)A). This Salmonella paratyphi A (strain ATCC 9150 / SARB42) protein is tRNA dimethylallyltransferase.